We begin with the raw amino-acid sequence, 116 residues long: Ino eighty subunit 4 (116 aa).

Residues 1-15 (MSQESSVLSESQEQL) are compositionally biased toward low complexity. Disordered regions lie at residues 1 to 40 (MSQE…PVLP) and 70 to 116 (EERQ…GLDS). Positions 84 to 108 (KGSDDKATRKKEPADEDPEVKQLEK) are enriched in basic and acidic residues.

Component of the chromatin-remodeling INO80 complex, at least composed of ARP4, ARP5, ARP8, RVB1, RVB2, TAF14, NHP10, IES1, IES3, IES4, IES6, ACT1, IES2, IES5 and INO80.

The protein resides in the nucleus. This Saccharomyces cerevisiae (strain ATCC 204508 / S288c) (Baker's yeast) protein is Ino eighty subunit 4 (IES4).